Here is a 273-residue protein sequence, read N- to C-terminus: 4-hydroxy-tetrahydrodipicolinate reductase (273 aa).

An NAD(+)-binding site is contributed by 12-17 (GSGGRM). Arg39 provides a ligand contact to NADP(+). Residues 102-104 (GTT) and 126-129 (AANF) each bind NAD(+). Residue His159 is the Proton donor/acceptor of the active site. His160 contacts (S)-2,3,4,5-tetrahydrodipicolinate. The Proton donor role is filled by Lys163. 169–170 (GT) is a binding site for (S)-2,3,4,5-tetrahydrodipicolinate.

The protein belongs to the DapB family. As to quaternary structure, homotetramer.

The protein resides in the cytoplasm. The enzyme catalyses (S)-2,3,4,5-tetrahydrodipicolinate + NAD(+) + H2O = (2S,4S)-4-hydroxy-2,3,4,5-tetrahydrodipicolinate + NADH + H(+). The catalysed reaction is (S)-2,3,4,5-tetrahydrodipicolinate + NADP(+) + H2O = (2S,4S)-4-hydroxy-2,3,4,5-tetrahydrodipicolinate + NADPH + H(+). It participates in amino-acid biosynthesis; L-lysine biosynthesis via DAP pathway; (S)-tetrahydrodipicolinate from L-aspartate: step 4/4. Catalyzes the conversion of 4-hydroxy-tetrahydrodipicolinate (HTPA) to tetrahydrodipicolinate. This is 4-hydroxy-tetrahydrodipicolinate reductase from Serratia proteamaculans (strain 568).